We begin with the raw amino-acid sequence, 95 residues long: Putative defensin-like protein 252 (95 aa).

A signal peptide spans 1 to 27 (MRCVTSFVVLCILMFLVVNNVKVDVKA). 4 cysteine pairs are disulfide-bonded: C34-C93, C45-C72, C56-C85, and C70-C87.

It belongs to the DEFL family.

Its subcellular location is the secreted. The chain is Putative defensin-like protein 252 (SCRL13) from Arabidopsis thaliana (Mouse-ear cress).